A 152-amino-acid chain; its full sequence is Ribosome maturation factor RimP (152 aa).

This sequence belongs to the RimP family.

The protein localises to the cytoplasm. Functionally, required for maturation of 30S ribosomal subunits. The sequence is that of Ribosome maturation factor RimP from Pseudoalteromonas atlantica (strain T6c / ATCC BAA-1087).